The primary structure comprises 175 residues: Molybdopterin-guanine dinucleotide biosynthesis adapter protein (175 aa).

GTP-binding positions include 17-21 (GTGKT), 51-54 (DKPG), and 100-103 (SKLD).

Belongs to the MobB family. In terms of assembly, homodimer. Interacts with MobA, MogA and MoeA in vivo.

In terms of biological role, GTP-binding protein that is not required for the biosynthesis of Mo-molybdopterin guanine dinucleotide (Mo-MGD) cofactor, and not necessary for the formation of active molybdoenzymes using this form of molybdenum cofactor. May act as an adapter protein to achieve the efficient biosynthesis and utilization of MGD. Displays a weak intrinsic GTPase activity. Is also able to bind the nucleotides ATP, TTP and GDP, but with lower affinity than GTP. This is Molybdopterin-guanine dinucleotide biosynthesis adapter protein (mobB) from Escherichia coli (strain K12).